Reading from the N-terminus, the 704-residue chain is UvrABC system protein C (704 aa).

Residues 1–77 (MIHDPAEPPA…PAQAGAGPMA (77 aa)) form a disordered region. Over residues 49-66 (VEEDDEARLPEVEDEPEA) the composition is skewed to acidic residues. Positions 67-77 (EPAQAGAGPMA) are enriched in low complexity. A GIY-YIG domain is found at 92 to 170 (TSPGVYRMLN…IKQLRPRFNV (79 aa)). In terms of domain architecture, UVR spans 280–315 (RAVKELLAAEMEKASGELEFETAALYRDRLAALSAI).

It belongs to the UvrC family. Interacts with UvrB in an incision complex.

Its subcellular location is the cytoplasm. Its function is as follows. The UvrABC repair system catalyzes the recognition and processing of DNA lesions. UvrC both incises the 5' and 3' sides of the lesion. The N-terminal half is responsible for the 3' incision and the C-terminal half is responsible for the 5' incision. In Rhodopseudomonas palustris (strain ATCC BAA-98 / CGA009), this protein is UvrABC system protein C.